A 1341-amino-acid polypeptide reads, in one-letter code: WD repeat-containing protein 19 (1341 aa).

WD repeat units follow at residues 11 to 51 (SWLG…RSEI), 52 to 92 (SLPG…TSQL), 95 to 134 (GMRDQMSFLLWSKIGSFLAVGTIKGNLLIYNHQTSRKIPV), 137 to 175 (KHTKKITCGCWNSENLLALGGEDKMITVSNQEGDTIRQT), 273 to 311 (DHKDNLTSVALSQTLNKAATCGDNCIKIHDLTELRDMYA), and 317 to 356 (DENKGLGTLSWTDDGQLLALSTQRGSLHVFLTKLPILGDA). 6 TPR repeats span residues 736-769 (AQDLYLASNCPVAALEMRRDLQHWDSALQLAKRL), 775-808 (PFISKEYAIQLEFTGDYVNALAHYEKGITGDNKE), 840-873 (RVLKRDCGAILENMKQFSEAAQLYEKGQYYDRAA), 895-928 (PKIHLQYAKAKEADGRYKEAVVAYENAKQWNSVI), 951-984 (LDGAKMVARFFLQLGDYGSAIQFLVLSKCNNEAF), and 1020-1053 (EKRHFQAGKFFLLCGQYSRALKHFLKCPSSEDNV).

As to quaternary structure, component of the IFT complex A (IFT-A) complex. IFT-A complex is divided into a core subcomplex composed of IFT122:IFT140:WDR19 which is associated with TULP3 and a peripheral subcomplex composed of IFT43:WDR35:TTC21B. Interacts (via C-terminal region) with IFT122 (via C-terminal region). Interacts with BBS1. Interacts with TTC25. Tissue-specific expression of isoforms. Expressed in the prostate, testis, epididymis, submaxillary and salivary glands. Expressed in ependymal cells lining brain ventricles (at protein level).

The protein resides in the cell projection. It localises to the cilium. The protein localises to the cytoplasm. Its subcellular location is the cytoskeleton. It is found in the cilium basal body. The protein resides in the photoreceptor outer segment. It localises to the flagellum. In terms of biological role, as component of the IFT complex A (IFT-A), a complex required for retrograde ciliary transport and entry into cilia of G protein-coupled receptors (GPCRs), it is involved in cilia function and/or assembly. Essential for functional IFT-A assembly and ciliary entry of GPCRs. Associates with the BBSome complex to mediate ciliary transport. The sequence is that of WD repeat-containing protein 19 from Mus musculus (Mouse).